The chain runs to 305 residues: Olfactory receptor 5M11 (305 aa).

The Extracellular portion of the chain corresponds to 1–25; it reads MSNTNGSAITEFILLGLTDCPELQS. An N-linked (GlcNAc...) asparagine glycan is attached at Asn-5. The helical transmembrane segment at 26–46 threads the bilayer; that stretch reads LLFVLFLVVYLVTLLGNLGMI. The Cytoplasmic portion of the chain corresponds to 47-54; sequence MLMRLDSR. A helical membrane pass occupies residues 55–75; that stretch reads LHTPMYFFLTNLAFVDLCYTS. The Extracellular segment spans residues 76–98; that stretch reads NATPQMSTNIVSEKTISFAGCFT. A disulfide bridge links Cys-96 with Cys-188. Residues 99-119 traverse the membrane as a helical segment; it reads QCYIFIALLLTEFYMLAAMAY. Residues 120-138 are Cytoplasmic-facing; that stretch reads DRYVAIYDPLRYSVKTSRR. A helical transmembrane segment spans residues 139–159; sequence VCICLATFPYVYGFSDGLFQA. At 160 to 195 the chain is on the extracellular side; it reads ILTFRLTFCRSSVINHFYCADPPLIKLSCSDTYVKE. A helical membrane pass occupies residues 196-216; sequence HAMFISAGFNLSSSLTIVLVS. The Cytoplasmic segment spans residues 217 to 236; the sequence is YAFILAAILRIKSAEGRHKA. A helical transmembrane segment spans residues 237–257; sequence FSTCGSHMMAVTLFYGTLFCM. The Extracellular segment spans residues 258–270; the sequence is YIRPPTDKTVEES. The helical transmembrane segment at 271-291 threads the bilayer; the sequence is KIIAVFYTFVSPVLNPLIYSL. Residues 292-305 lie on the Cytoplasmic side of the membrane; it reads RNKDVKQALKNVLR.

It belongs to the G-protein coupled receptor 1 family.

Its subcellular location is the cell membrane. In terms of biological role, odorant receptor. In Homo sapiens (Human), this protein is Olfactory receptor 5M11 (OR5M11).